The primary structure comprises 905 residues: Alanine--tRNA ligase (905 aa).

Zn(2+) is bound by residues His582, His586, Cys687, and His691.

This sequence belongs to the class-II aminoacyl-tRNA synthetase family. Zn(2+) serves as cofactor.

It localises to the cytoplasm. It carries out the reaction tRNA(Ala) + L-alanine + ATP = L-alanyl-tRNA(Ala) + AMP + diphosphate. Its function is as follows. Catalyzes the attachment of alanine to tRNA(Ala) in a two-step reaction: alanine is first activated by ATP to form Ala-AMP and then transferred to the acceptor end of tRNA(Ala). Also edits incorrectly charged Ser-tRNA(Ala) and Gly-tRNA(Ala) via its editing domain. This Mycoplasma mobile (strain ATCC 43663 / 163K / NCTC 11711) (Mesomycoplasma mobile) protein is Alanine--tRNA ligase.